The sequence spans 214 residues: MTKQIKGILGEKLGMTQVWDENNRVVPVTVVKAGPNVVTQVRTNDVDGYESVQIAFGEIDPRKVNKPLKGHFAKADVTPRRHLVEIRTAAASEYTLGQEITAEAFESGVKVDVTAKSKGKGFAGVMKRHNFKGGKASHGAHRVHRMPGSIGGCATPGRVFKGMRMAGRMGNERVTTQNLTVHAVDAEKGLLLIKGAVPGPNGGLVLVRTAAKGA.

The protein belongs to the universal ribosomal protein uL3 family. In terms of assembly, part of the 50S ribosomal subunit. Forms a cluster with proteins L14 and L19.

Functionally, one of the primary rRNA binding proteins, it binds directly near the 3'-end of the 23S rRNA, where it nucleates assembly of the 50S subunit. This Streptomyces coelicolor (strain ATCC BAA-471 / A3(2) / M145) protein is Large ribosomal subunit protein uL3.